Consider the following 125-residue polypeptide: Ribonuclease pancreatic (125 aa).

Residues Lys-7 and Arg-10 each coordinate substrate. His-12 serves as the catalytic Proton acceptor. 4 cysteine pairs are disulfide-bonded: Cys-27–Cys-85, Cys-41–Cys-96, Cys-59–Cys-111, and Cys-66–Cys-73. An N-linked (GlcNAc...) asparagine glycan is attached at Asn-35. Residues 42–46 (KPVNT), Lys-67, and Arg-86 contribute to the substrate site. His-120 serves as the catalytic Proton donor.

The protein belongs to the pancreatic ribonuclease family. In terms of assembly, monomer. Interacts with and forms tight 1:1 complexes with RNH1. Dimerization of two such complexes may occur. Interaction with RNH1 inhibits this protein. Pancreas.

It localises to the secreted. It carries out the reaction an [RNA] containing cytidine + H2O = an [RNA]-3'-cytidine-3'-phosphate + a 5'-hydroxy-ribonucleotide-3'-[RNA].. It catalyses the reaction an [RNA] containing uridine + H2O = an [RNA]-3'-uridine-3'-phosphate + a 5'-hydroxy-ribonucleotide-3'-[RNA].. In terms of biological role, endonuclease that catalyzes the cleavage of RNA on the 3' side of pyrimidine nucleotides. Acts on single-stranded and double-stranded RNA. In Spalax ehrenbergi (Middle East blind mole rat), this protein is Ribonuclease pancreatic (RNASE1).